Consider the following 407-residue polypeptide: MSSSPMLGGIADRWRELHGQDSWNGLLDPLDLDLRSSILSYGELVQATYDSFNRERRSPHAGACVYGHGDLLAAAGASAAGSYAVTKFVYATSGLPVPEAFLLLPLPSLLPPAWSRESNWMGYVAVATDEGVAALGRRDIVVAWRGTVESLEWVNDFDFTPVPAAPVLGAAAAANPRAIVHRGFLSVYTSSNKDSKYNKASARDQVLEEVRRLMELYKDEVTSITVVGHSLGASLATLNAVDIVANGANCPPASSSSSQPPCPVTAIVFASPRVGDGFFKAAFASFPDLRALHVKNAGDVVPMYPPLGYVDVAVKLRISTSRSPYLRSPGTIETLHNLECYLHGVAGEQGSAGGFKLEVDRDVALANKGVDALKDKYPVPPRWWVSKNRCMVKDADGHWALHDFEQI.

Residue serine 230 is the Acyl-ester intermediate of the active site. Active-site charge relay system residues include serine 230, aspartate 299, and histidine 336.

The protein belongs to the AB hydrolase superfamily. Lipase family.

The protein resides in the cytoplasm. In terms of biological role, acylhydrolase that catalyzes the hydrolysis of phospholipids at the sn-1 position. This is Phospholipase A1-II 7 from Oryza sativa subsp. indica (Rice).